The primary structure comprises 37 residues: DICDDAVAQCSMTLCQLCYNTEICELSVIGSCQPPFS.

3 cysteine pairs are disulfide-bonded: cysteine 3/cysteine 18, cysteine 10/cysteine 32, and cysteine 15/cysteine 24.

Homodimer.

It localises to the secreted. Mating ciliate pheromones (or gamones) are diffusible extracellular communication signals that distinguish different intraspecific classes of cells commonly referred to as 'mating types'. They prepare the latter for conjugation by changing their cell surface properties. The protein is Mating pheromone Er-20 (MAT20) of Euplotes raikovi.